We begin with the raw amino-acid sequence, 150 residues long: Large ribosomal subunit protein bL9 (150 aa).

The protein belongs to the bacterial ribosomal protein bL9 family.

Its function is as follows. Binds to the 23S rRNA. The protein is Large ribosomal subunit protein bL9 of Lactiplantibacillus plantarum (strain ATCC BAA-793 / NCIMB 8826 / WCFS1) (Lactobacillus plantarum).